The sequence spans 223 residues: Small ribosomal subunit protein uS3 (223 aa).

The KH type-2 domain occupies 39–115 (IRKYIEKNLA…RVFINIVEIK (77 aa)).

This sequence belongs to the universal ribosomal protein uS3 family. In terms of assembly, part of the 30S ribosomal subunit. Forms a tight complex with proteins S10 and S14.

In terms of biological role, binds the lower part of the 30S subunit head. Binds mRNA in the 70S ribosome, positioning it for translation. In Leuconostoc citreum (strain KM20), this protein is Small ribosomal subunit protein uS3.